Here is a 128-residue protein sequence, read N- to C-terminus: uncharacterized protein (128 aa).

This is an uncharacterized protein from Saccharomyces cerevisiae (strain ATCC 204508 / S288c) (Baker's yeast).